Consider the following 274-residue polypeptide: NH(3)-dependent NAD(+) synthetase (274 aa).

46 to 53 (GISGGQDS) contributes to the ATP binding site. Position 52 (Asp52) interacts with Mg(2+). Arg140 provides a ligand contact to deamido-NAD(+). Thr160 lines the ATP pocket. Residue Glu165 participates in Mg(2+) binding. Residues Lys173 and Asp180 each contribute to the deamido-NAD(+) site. Residues Lys189 and Thr211 each contribute to the ATP site. Position 260-261 (260-261 (HK)) interacts with deamido-NAD(+).

This sequence belongs to the NAD synthetase family. In terms of assembly, homodimer.

The enzyme catalyses deamido-NAD(+) + NH4(+) + ATP = AMP + diphosphate + NAD(+) + H(+). Its pathway is cofactor biosynthesis; NAD(+) biosynthesis; NAD(+) from deamido-NAD(+) (ammonia route): step 1/1. Functionally, catalyzes the ATP-dependent amidation of deamido-NAD to form NAD. Uses ammonia as a nitrogen source. The sequence is that of NH(3)-dependent NAD(+) synthetase from Streptococcus gordonii (strain Challis / ATCC 35105 / BCRC 15272 / CH1 / DL1 / V288).